The primary structure comprises 278 residues: NAD-dependent protein deacylase (278 aa).

The Deacetylase sirtuin-type domain maps to 22-270 (RSRIFHRDSA…PEYIREFLTT (249 aa)). 46–65 (GAGISAESGIRTFRADDGLW) contributes to the NAD(+) binding site. Y90 and R93 together coordinate substrate. 127–130 (QNID) is an NAD(+) binding site. The active-site Proton acceptor is H145. 2 residues coordinate Zn(2+): C153 and C172. NAD(+) contacts are provided by residues 212-214 (GTS), 238-240 (NLE), and A256.

This sequence belongs to the sirtuin family. Class III subfamily. Zn(2+) is required as a cofactor.

The protein localises to the cytoplasm. The enzyme catalyses N(6)-acetyl-L-lysyl-[protein] + NAD(+) + H2O = 2''-O-acetyl-ADP-D-ribose + nicotinamide + L-lysyl-[protein]. It carries out the reaction N(6)-succinyl-L-lysyl-[protein] + NAD(+) + H2O = 2''-O-succinyl-ADP-D-ribose + nicotinamide + L-lysyl-[protein]. The catalysed reaction is N(6)-(2-hydroxyisobutanoyl)-L-lysyl-[protein] + NAD(+) + H2O = 2''-O-(2-hydroxyisobutanoyl)-ADP-D-ribose + nicotinamide + L-lysyl-[protein]. In terms of biological role, NAD-dependent lysine deacetylase that specifically removes acetyl groups on target proteins. Also acts as a protein-lysine deacylase by mediating protein desuccinylation and de-2-hydroxyisobutyrylation. Modulates the activities of several proteins which are inactive in their acylated form. The sequence is that of NAD-dependent protein deacylase from Yersinia pestis.